Consider the following 398-residue polypeptide: Acetate kinase (398 aa).

Residue Asn9 participates in Mg(2+) binding. Lys16 contacts ATP. Residue Arg90 coordinates substrate. The active-site Proton donor/acceptor is Asp147. ATP-binding positions include 207-211, 282-284, and 330-334; these read HIGNG, DLR, and GVGEN. Glu384 is a Mg(2+) binding site.

This sequence belongs to the acetokinase family. Homodimer. Requires Mg(2+) as cofactor. It depends on Mn(2+) as a cofactor.

It is found in the cytoplasm. The catalysed reaction is acetate + ATP = acetyl phosphate + ADP. It functions in the pathway metabolic intermediate biosynthesis; acetyl-CoA biosynthesis; acetyl-CoA from acetate: step 1/2. Its function is as follows. Catalyzes the formation of acetyl phosphate from acetate and ATP. Can also catalyze the reverse reaction. In Staphylococcus carnosus (strain TM300), this protein is Acetate kinase.